A 196-amino-acid polypeptide reads, in one-letter code: RNA-binding protein with multiple splicing (196 aa).

The residue at position 1 (M1) is an N-acetylmethionine. T12 is modified (phosphothreonine). The RRM domain maps to 24 to 101 (RTLFVSGLPL…QTLRLEFAKA (78 aa)). Positions 98 to 105 (FAKANTKM) are interaction with RNA. T113 bears the Phosphothreonine mark.

As to quaternary structure, homodimer; each protein chain binds one RNA molecule via the external surface of the homodimer. Interacts with RNA binding proteins MBNL1, RBFOX2, RBM4 and RBM14; the interaction allows cooperative assembly of stable cell-specific alternative splicing regulatory complexes. Interacts with SMAD2, SMAD3 and SMAD4; the interactions are direct. In terms of tissue distribution, ubiquitously expressed, at various levels depending on the isoform and the tissue. Strongly expressed in the heart, prostate, small intestine, large intestine, and ovary; moderately expressed in the placenta, lung, liver, kidney, pancreas, and testis; and poorly expressed in the skeletal muscle, spleen, thymus and peripheral leukocytes.

It is found in the nucleus. The protein resides in the cytoplasm. The protein localises to the stress granule. Its subcellular location is the P-body. RNA binding protein that mediates the regulation of pre-mRNA alternative splicing (AS). Acts either as activator (FLNB, HSPG2, LIPA1, MYOCD, PTPRF and PPFIBP1) or repressor (TPM1, ACTN1, ITGA7, PIEZO1, LSM14B, MBNL1 and MBML2) of splicing events on specific pre-mRNA targets. Together with RNA binding proteins RBFOX2 and MBNL1/2, activates a splicing program associated with differentiated contractile vascular smooth muscle cells (SMC) by regulating AS of numerous pre-mRNA involved in actin cytoskeleton and focal adhesion machineries, suggesting a role in promoting a cell differentiated state. Binds to introns, exons and 3'-UTR associated with tandem CAC trinucleotide motifs separated by a variable spacer region, at a minimum as a dimer. The minimal length of RNA required for RBPMS-binding tandem CAC motifs is 15 nt, with spacing ranging from 1 to 9 nt. Can also bind to CA dinucleotide repeats. Mediates repression of TPM1 exon 3 by binding to CAC tandem repeats in the flanking intronic regions, followed by higher-order oligomerization and heterotypic interactions with other splicing regulators including MBNL1 and RBFOX2, which prevents assembly of ATP-dependent splicing complexes. Its function is as follows. Acts as a regulator of pre-mRNA alternative splicing (AS). Binds mRNA. Regulates AS of ACTN1, FLNB, although with lower efficiency than isoform A / RBPMSA. Acts as coactivator of SMAD transcriptional activity in a TGFB1-dependent manner, possibly through increased phosphorylation of SMAD2 and SMAD3 at the C-terminal SSXS regions and promotion of the nuclear accumulation of SMAD proteins. In Homo sapiens (Human), this protein is RNA-binding protein with multiple splicing.